A 54-amino-acid polypeptide reads, in one-letter code: Ribulose bisphosphate carboxylase large chain (54 aa).

The propeptide occupies 1 to 2; the sequence is MS. Pro3 is modified (N-acetylproline). N6,N6,N6-trimethyllysine is present on Lys14.

This sequence belongs to the RuBisCO large chain family. Type I subfamily. As to quaternary structure, heterohexadecamer of 8 large chains and 8 small chains.

It localises to the plastid. The protein localises to the chloroplast. It carries out the reaction 2 (2R)-3-phosphoglycerate + 2 H(+) = D-ribulose 1,5-bisphosphate + CO2 + H2O. The enzyme catalyses D-ribulose 1,5-bisphosphate + O2 = 2-phosphoglycolate + (2R)-3-phosphoglycerate + 2 H(+). Its function is as follows. RuBisCO catalyzes two reactions: the carboxylation of D-ribulose 1,5-bisphosphate, the primary event in carbon dioxide fixation, as well as the oxidative fragmentation of the pentose substrate in the photorespiration process. Both reactions occur simultaneously and in competition at the same active site. The polypeptide is Ribulose bisphosphate carboxylase large chain (rbcL) (Icacina mannii).